The following is a 341-amino-acid chain: UDP-3-O-acylglucosamine N-acyltransferase (341 aa).

Catalysis depends on histidine 239, which acts as the Proton acceptor.

It belongs to the transferase hexapeptide repeat family. LpxD subfamily. As to quaternary structure, homotrimer.

It carries out the reaction a UDP-3-O-[(3R)-3-hydroxyacyl]-alpha-D-glucosamine + a (3R)-hydroxyacyl-[ACP] = a UDP-2-N,3-O-bis[(3R)-3-hydroxyacyl]-alpha-D-glucosamine + holo-[ACP] + H(+). Its pathway is bacterial outer membrane biogenesis; LPS lipid A biosynthesis. Catalyzes the N-acylation of UDP-3-O-acylglucosamine using 3-hydroxyacyl-ACP as the acyl donor. Is involved in the biosynthesis of lipid A, a phosphorylated glycolipid that anchors the lipopolysaccharide to the outer membrane of the cell. The chain is UDP-3-O-acylglucosamine N-acyltransferase from Idiomarina loihiensis (strain ATCC BAA-735 / DSM 15497 / L2-TR).